The following is a 451-amino-acid chain: DNA polymerase delta subunit 3 (451 aa).

Disordered stretches follow at residues 187–241 (SQAK…AASS), 259–386 (KQTP…KVLR), and 404–451 (AWES…FAKK). The segment covering 200–216 (PSTSQVKEAPKASQTVE) has biased composition (polar residues). Residues 225–241 (SAPAKKGSSAPKSAASS) show a composition bias toward low complexity. Over residues 306 to 316 (QREEELRRMME) the composition is skewed to basic and acidic residues. Acidic residues predominate over residues 329–353 (EEEEEEEEEEESEHEQLPAEEEPMA). Residues 354 to 366 (EEPKAPEPVKEEP) show a composition bias toward basic and acidic residues. A compositionally biased stretch (basic residues) spans 376–386 (GRRRGKRKVLR). Positions 441-448 (QGSIMSWF) match the PIP-box motif.

Component of the DNA polymerase delta complex which consists of PolD1, PolD2, PolD3 and PolD4, with PolD1 bearing DNA polymerase and 3' to 5' proofreading exonuclease activities. Directly interacts with PCNA.

The protein resides in the nucleus. Accessory component of the DNA polymerase delta complex. The complex is required for the maintenance of genome integrity, acting in concert with the sliding clamp processivity factor PCNA. This is DNA polymerase delta subunit 3 from Chaetomium thermophilum (strain DSM 1495 / CBS 144.50 / IMI 039719) (Thermochaetoides thermophila).